The primary structure comprises 406 residues: Elongation factor Tu-A (406 aa).

A tr-type G domain is found at 10–215; sequence KPHVNVGTIG…AIDEYIPTPV (206 aa). Residues 19-26 are G1; the sequence is GHVDHGKT. 19–26 lines the GTP pocket; the sequence is GHVDHGKT. Mg(2+) is bound at residue Thr26. Residues 61 to 65 form a G2 region; it reads GITIN. The tract at residues 82-85 is G3; the sequence is DCPG. Residues 82 to 86 and 137 to 140 contribute to the GTP site; these read DCPGH and NKVD. Positions 137-140 are G4; sequence NKVD. The segment at 175–177 is G5; sequence SAL. Thr395 bears the Phosphothreonine mark.

It belongs to the TRAFAC class translation factor GTPase superfamily. Classic translation factor GTPase family. EF-Tu/EF-1A subfamily. In terms of assembly, monomer. Binds to the 70S ribosome, contacts tmRNA during trans-translation. Phosphorylated on a threonine.

It is found in the cytoplasm. The enzyme catalyses GTP + H2O = GDP + phosphate + H(+). Its function is as follows. GTP hydrolase that promotes the GTP-dependent binding of aminoacyl-tRNA to the A-site of ribosomes during protein biosynthesis. Functionally, EF-Tu-GDP binds to the acceptor arm of tmRNA by interacting with its acceptor arm, suggesting that GTP hydrolysis by EF-Tu is essential for tmRNA function. In terms of biological role, protects glycyl-tRNA(Gly) from hydrolysis by E.coli D-aminoacyl-tRNA deacylase (dtd). This chain is Elongation factor Tu-A, found in Thermus thermophilus (strain ATCC 27634 / DSM 579 / HB8).